The following is a 79-amino-acid chain: Exodeoxyribonuclease 7 small subunit (79 aa).

Belongs to the XseB family. Heterooligomer composed of large and small subunits.

The protein localises to the cytoplasm. The enzyme catalyses Exonucleolytic cleavage in either 5'- to 3'- or 3'- to 5'-direction to yield nucleoside 5'-phosphates.. Bidirectionally degrades single-stranded DNA into large acid-insoluble oligonucleotides, which are then degraded further into small acid-soluble oligonucleotides. In Lactococcus lactis subsp. cremoris (strain MG1363), this protein is Exodeoxyribonuclease 7 small subunit.